The sequence spans 586 residues: Phosphomethylpyrimidine synthase (586 aa).

The interval Met1–Pro59 is disordered. Residues Val22 to Glu39 are compositionally biased toward basic and acidic residues. Substrate-binding positions include Asn193, Met222, Tyr251, His287, Ser307 to Gly309, Asp348 to Arg351, and Glu387. His391 lines the Zn(2+) pocket. Tyr414 contributes to the substrate binding site. His455 is a Zn(2+) binding site. [4Fe-4S] cluster contacts are provided by Cys535, Cys538, and Cys543.

This sequence belongs to the ThiC family. [4Fe-4S] cluster serves as cofactor.

It catalyses the reaction 5-amino-1-(5-phospho-beta-D-ribosyl)imidazole + S-adenosyl-L-methionine = 4-amino-2-methyl-5-(phosphooxymethyl)pyrimidine + CO + 5'-deoxyadenosine + formate + L-methionine + 3 H(+). The protein operates within cofactor biosynthesis; thiamine diphosphate biosynthesis. In terms of biological role, catalyzes the synthesis of the hydroxymethylpyrimidine phosphate (HMP-P) moiety of thiamine from aminoimidazole ribotide (AIR) in a radical S-adenosyl-L-methionine (SAM)-dependent reaction. The protein is Phosphomethylpyrimidine synthase of Bacillus cereus (strain ATCC 14579 / DSM 31 / CCUG 7414 / JCM 2152 / NBRC 15305 / NCIMB 9373 / NCTC 2599 / NRRL B-3711).